We begin with the raw amino-acid sequence, 278 residues long: Membrane protein insertase YidC 2 (278 aa).

The N-terminal stretch at 1-18 is a signal peptide; it reads MHKRLFITLLGFIILLAG. Cysteine 19 carries the N-palmitoyl cysteine lipid modification. A lipid anchor (S-diacylglycerol cysteine) is attached at cysteine 19. Transmembrane regions (helical) follow at residues 55–75, 132–152, 176–196, and 224–244; these read GFAI…FMLI, MLGC…YMSL, LIMT…NSIH, and AAAL…QMHF.

Belongs to the OXA1/ALB3/YidC family. Type 2 subfamily.

It is found in the cell membrane. Functionally, required for the insertion and/or proper folding and/or complex formation of integral membrane proteins into the membrane. Involved in integration of membrane proteins that insert both dependently and independently of the Sec translocase complex, as well as at least some lipoproteins. The polypeptide is Membrane protein insertase YidC 2 (Staphylococcus epidermidis (strain ATCC 12228 / FDA PCI 1200)).